The sequence spans 341 residues: 4-amino-5-hydroxymethyl-2-methylpyrimidine phosphate synthase (341 aa).

Lys62 carries the N6-(pyridoxal phosphate)lysine modification. His66 is an active-site residue. Position 115-118 (115-118 (GEFG)) interacts with pyridoxal 5'-phosphate. The CCCFC; essential for catalytic activity, may be the site of iron coordination signature appears at 195–199 (CCCFC).

The protein belongs to the NMT1/THI5 family. As to quaternary structure, homodimer. The cofactor is Fe cation.

The enzyme catalyses N(6)-(pyridoxal phosphate)-L-lysyl-[4-amino-5-hydroxymethyl-2-methylpyrimidine phosphate synthase] + L-histidyl-[4-amino-5-hydroxymethyl-2-methylpyrimidine phosphate synthase] + 2 Fe(3+) + 4 H2O = L-lysyl-[4-amino-5-hydroxymethyl-2-methylpyrimidine phosphate synthase] + (2S)-2-amino-5-hydroxy-4-oxopentanoyl-[4-amino-5-hydroxymethyl-2-methylpyrimidine phosphate synthase] + 4-amino-2-methyl-5-(phosphooxymethyl)pyrimidine + 3-oxopropanoate + 2 Fe(2+) + 2 H(+). Its pathway is cofactor biosynthesis; thiamine diphosphate biosynthesis. Responsible for the formation of the pyrimidine heterocycle in the thiamine biosynthesis pathway. Catalyzes the formation of hydroxymethylpyrimidine phosphate (HMP-P) from histidine and pyridoxal phosphate (PLP). The protein uses PLP and the active site histidine to form HMP-P, generating an inactive enzyme. The enzyme can only undergo a single turnover, which suggests it is a suicide enzyme. This is 4-amino-5-hydroxymethyl-2-methylpyrimidine phosphate synthase from Uromyces fabae (Rust fungus).